Consider the following 520-residue polypeptide: Laccase-4 (520 aa).

An N-terminal signal peptide occupies residues 1–18 (MGRFSSLCALTAVIHSFG). Plastocyanin-like domains lie at 24 to 149 (IGPV…MVVY), 161 to 303 (VDDE…ILRY), and 370 to 491 (TVPV…FSED). 2 N-linked (GlcNAc...) asparagine glycosylation sites follow: asparagine 73 and asparagine 76. Cu cation contacts are provided by histidine 86, histidine 88, histidine 131, and histidine 133. Disulfide bonds link cysteine 107/cysteine 509 and cysteine 139/cysteine 227. N-linked (GlcNAc...) asparagine glycans are attached at residues asparagine 239 and asparagine 399. 7 residues coordinate Cu cation: histidine 418, histidine 421, histidine 423, histidine 473, cysteine 474, histidine 475, and histidine 479. N-linked (GlcNAc...) asparagine glycosylation is present at asparagine 497.

The protein belongs to the multicopper oxidase family. Homodimer. The cofactor is Cu cation.

The protein resides in the secreted. It carries out the reaction 4 hydroquinone + O2 = 4 benzosemiquinone + 2 H2O. Functionally, lignin degradation and detoxification of lignin-derived products. This chain is Laccase-4 (LCC4), found in Trametes villosa (White-rot fungus).